Here is a 183-residue protein sequence, read N- to C-terminus: Large ribosomal subunit protein uL13m (183 aa).

Belongs to the universal ribosomal protein uL13 family. In terms of assembly, component of the mitochondrial large ribosomal subunit (mt-LSU). Mature N.crassa 74S mitochondrial ribosomes consist of a small (37S) and a large (54S) subunit. The 37S small subunit contains a 16S ribosomal RNA (16S mt-rRNA) and 32 different proteins. The 54S large subunit contains a 23S rRNA (23S mt-rRNA) and 42 different proteins.

Its subcellular location is the mitochondrion. Its function is as follows. Component of the mitochondrial ribosome (mitoribosome), a dedicated translation machinery responsible for the synthesis of mitochondrial genome-encoded proteins, including at least some of the essential transmembrane subunits of the mitochondrial respiratory chain. The mitoribosomes are attached to the mitochondrial inner membrane and translation products are cotranslationally integrated into the membrane. The chain is Large ribosomal subunit protein uL13m (mrpl23) from Neurospora crassa (strain ATCC 24698 / 74-OR23-1A / CBS 708.71 / DSM 1257 / FGSC 987).